Consider the following 1035-residue polypeptide: Alpha-mannosidase B (1035 aa).

The signal sequence occupies residues 1–20; the sequence is MGKVLILFLFVLLLITFINC. Residues Asn19 and Asn30 are each glycosylated (N-linked (GlcNAc...) asparagine). Residues His47 and Asp49 each contribute to the Zn(2+) site. The N-linked (GlcNAc...) asparagine glycan is linked to Asn63. A Zn(2+)-binding site is contributed by Asp161. The Nucleophile role is filled by Asp161. Asn245, Asn250, Asn270, Asn309, Asn327, and Asn438 each carry an N-linked (GlcNAc...) asparagine glycan. A Zn(2+)-binding site is contributed by His446. 12 N-linked (GlcNAc...) asparagine glycosylation sites follow: Asn487, Asn497, Asn503, Asn710, Asn719, Asn735, Asn792, Asn852, Asn863, Asn880, Asn962, and Asn993.

Belongs to the glycosyl hydrolase 38 family. Zn(2+) is required as a cofactor.

It localises to the secreted. It carries out the reaction Hydrolysis of terminal, non-reducing alpha-D-mannose residues in alpha-D-mannosides.. This Dictyostelium discoideum (Social amoeba) protein is Alpha-mannosidase B (manB).